Here is a 346-residue protein sequence, read N- to C-terminus: Methylthioribose-1-phosphate isomerase (346 aa).

Substrate contacts are provided by residues 46-48 (RGA), Arg-89, and Gln-196. Asp-237 serves as the catalytic Proton donor. Residue 247 to 248 (NK) coordinates substrate.

Belongs to the eIF-2B alpha/beta/delta subunits family. MtnA subfamily.

It carries out the reaction 5-(methylsulfanyl)-alpha-D-ribose 1-phosphate = 5-(methylsulfanyl)-D-ribulose 1-phosphate. It functions in the pathway amino-acid biosynthesis; L-methionine biosynthesis via salvage pathway; L-methionine from S-methyl-5-thio-alpha-D-ribose 1-phosphate: step 1/6. Functionally, catalyzes the interconversion of methylthioribose-1-phosphate (MTR-1-P) into methylthioribulose-1-phosphate (MTRu-1-P). The sequence is that of Methylthioribose-1-phosphate isomerase from Geotalea daltonii (strain DSM 22248 / JCM 15807 / FRC-32) (Geobacter daltonii).